The sequence spans 478 residues: Metalloendopeptidase OMA1, mitochondrial (478 aa).

Positions leucine 134–phenylalanine 164 are stress-sensor region. Residues histidine 163–leucine 183 form a helical membrane-spanning segment. A Zn(2+)-binding site is contributed by histidine 296. Residue glutamate 297 is part of the active site. 2 residues coordinate Zn(2+): histidine 300 and glutamate 361. The cysteines at positions 376 and 434 are disulfide-linked.

Belongs to the peptidase M48 family. Homooligomer. The cofactor is Zn(2+). In terms of processing, autocatalytically cleaved in response to mitochondrial depolarization both at the N-terminus and C-terminus to generate the short active form (S-OMA1). The S-OMA1 form is unstable. Post-translationally, may form a redox-dependent disulfide bond. Exists in a semi-oxidized state and is activated by prolonged hypoxia.

It is found in the mitochondrion inner membrane. Its activity is regulated as follows. Protease activity is activated upon autocatalytic cleavage in response to mitochondrial depolarization. Metalloprotease that is part of the quality control system in the inner membrane of mitochondria. Activated in response to various mitochondrial stress, leading to the proteolytic cleavage of target proteins, such as opa1 and dele1. Involved in the fusion of the mitochondrial inner membranes by mediating cleavage of opa1 at S1 position, generating the soluble opa1 (S-opa1), which cooperates with the membrane form (L-opa1) to coordinate the fusion of mitochondrial inner membranes. Following stress conditions that induce loss of mitochondrial membrane potential, mediates cleavage of opa1, leading to excess production of soluble opa1 (S-opa1) and negative regulation of mitochondrial fusion. Also acts as an activator of the integrated stress response (ISR): in response to mitochondrial stress, mediates cleavage of dele1 to generate the processed form of dele1 (S-DELE1), which translocates to the cytosol and activates eif2ak1/hri to trigger the ISR. Required for the stability of the respiratory supercomplexes. The polypeptide is Metalloendopeptidase OMA1, mitochondrial (Danio rerio (Zebrafish)).